The following is a 431-amino-acid chain: SPI-1 type 3 secretion system ATPase (431 aa).

Residue 162–167 (GCGKTM) participates in ATP binding.

It belongs to the ATPase alpha/beta chains family. T3SS ATPase subfamily. As to quaternary structure, the core secretion machinery of the T3SS is composed of approximately 20 different proteins, including cytoplasmic components, a base, an export apparatus and a needle. This subunit is part of the cytosolic complex. Forms homohexamers.

The protein localises to the cytoplasm. The enzyme catalyses ATP + H2O + cellular proteinSide 1 = ADP + phosphate + cellular proteinSide 2.. In terms of biological role, ATPase component of the type III secretion system (T3SS), also called injectisome, which is used to inject bacterial effector proteins into eukaryotic host cells. Acts as a molecular motor to provide the energy that is required for the export of proteins. Required for type III secretion apparatus (T3SA) formation, proper protein secretion, host cell invasion and virulence. May play a critical role in T3SS substrate recognition, disassembly of the effector/chaperone complex and unfolding of the effector in an ATP-dependent manner prior to secretion. This is SPI-1 type 3 secretion system ATPase from Salmonella typhi.